Reading from the N-terminus, the 294-residue chain is Bifunctional protein FolD (294 aa).

NADP(+) contacts are provided by residues 175 to 177 (GVS) and Ile243.

The protein belongs to the tetrahydrofolate dehydrogenase/cyclohydrolase family. As to quaternary structure, homodimer.

The enzyme catalyses (6R)-5,10-methylene-5,6,7,8-tetrahydrofolate + NADP(+) = (6R)-5,10-methenyltetrahydrofolate + NADPH. It catalyses the reaction (6R)-5,10-methenyltetrahydrofolate + H2O = (6R)-10-formyltetrahydrofolate + H(+). It functions in the pathway one-carbon metabolism; tetrahydrofolate interconversion. Catalyzes the oxidation of 5,10-methylenetetrahydrofolate to 5,10-methenyltetrahydrofolate and then the hydrolysis of 5,10-methenyltetrahydrofolate to 10-formyltetrahydrofolate. This chain is Bifunctional protein FolD, found in Xanthomonas campestris pv. campestris (strain 8004).